A 107-amino-acid chain; its full sequence is C-X-C motif chemokine 3 (107 aa).

Positions 1 to 34 (MAHATLSAAPSNPRLLRVALLLLLLVAASRRAAG) are cleaved as a signal peptide. 2 cysteine pairs are disulfide-bonded: Cys-43–Cys-69 and Cys-45–Cys-85.

This sequence belongs to the intercrine alpha (chemokine CxC) family. Post-translationally, N-terminal processed form GRO-gamma(5-73) is produced by proteolytic cleavage after secretion from peripheral blood monocytes.

It is found in the secreted. In terms of biological role, ligand for CXCR2. Has chemotactic activity for neutrophils. May play a role in inflammation and exert its effects on endothelial cells in an autocrine fashion. In vitro, the processed form GRO-gamma(5-73) shows a fivefold higher chemotactic activity for neutrophilic granulocytes. The protein is C-X-C motif chemokine 3 (CXCL3) of Homo sapiens (Human).